The sequence spans 236 residues: 2,3,4,5-tetrahydropyridine-2,6-dicarboxylate N-acetyltransferase (236 aa).

This sequence belongs to the transferase hexapeptide repeat family. DapH subfamily.

It carries out the reaction (S)-2,3,4,5-tetrahydrodipicolinate + acetyl-CoA + H2O = L-2-acetamido-6-oxoheptanedioate + CoA. It functions in the pathway amino-acid biosynthesis; L-lysine biosynthesis via DAP pathway; LL-2,6-diaminopimelate from (S)-tetrahydrodipicolinate (acetylase route): step 1/3. Functionally, catalyzes the transfer of an acetyl group from acetyl-CoA to tetrahydrodipicolinate. The sequence is that of 2,3,4,5-tetrahydropyridine-2,6-dicarboxylate N-acetyltransferase from Oceanobacillus iheyensis (strain DSM 14371 / CIP 107618 / JCM 11309 / KCTC 3954 / HTE831).